Consider the following 245-residue polypeptide: AP-1-like transcription factor YAP7 (245 aa).

The interval 1-144 (MRQRRSVVAV…NRDAQRAYRE (144 aa)) is disordered. The span at 74 to 94 (SANNDGSSKIKKVQTSNQKDQ) shows a compositional bias: polar residues. Basic and acidic residues-rich tracts occupy residues 95–114 (MTTK…KSDD) and 135–144 (NRDAQRAYRE). Residues 125-188 (VDSVEKRRRQ…SDTKENLQKS (64 aa)) enclose the bZIP domain. The segment at 130 to 149 (KRRRQNRDAQRAYRERRTTR) is basic motif. The segment at 153–181 (LEEKVEMLHNLVDDWQRKYKLLESEFSDT) is leucine-zipper.

The protein belongs to the bZIP family. YAP subfamily. In terms of assembly, homodimer.

Its subcellular location is the nucleus. Functionally, probable transcription activator linked to cell cycle that induces transcription activation of genes in the environmental stress response and metabolism control pathways, like the closely related YAP5. In Saccharomyces cerevisiae (strain ATCC 204508 / S288c) (Baker's yeast), this protein is AP-1-like transcription factor YAP7 (YAP7).